The following is a 230-amino-acid chain: Orotidine 5'-phosphate decarboxylase (230 aa).

Substrate is bound by residues D10, K31, D58–T67, T117, R179, Q188, G208, and R209. K60 functions as the Proton donor in the catalytic mechanism.

It belongs to the OMP decarboxylase family. Type 1 subfamily. In terms of assembly, homodimer.

It carries out the reaction orotidine 5'-phosphate + H(+) = UMP + CO2. It functions in the pathway pyrimidine metabolism; UMP biosynthesis via de novo pathway; UMP from orotate: step 2/2. Its function is as follows. Catalyzes the decarboxylation of orotidine 5'-monophosphate (OMP) to uridine 5'-monophosphate (UMP). The sequence is that of Orotidine 5'-phosphate decarboxylase from Staphylococcus epidermidis (strain ATCC 35984 / DSM 28319 / BCRC 17069 / CCUG 31568 / BM 3577 / RP62A).